A 374-amino-acid chain; its full sequence is Putative glutamate--cysteine ligase 2 (374 aa).

The protein belongs to the glutamate--cysteine ligase type 2 family. YbdK subfamily.

The catalysed reaction is L-cysteine + L-glutamate + ATP = gamma-L-glutamyl-L-cysteine + ADP + phosphate + H(+). In terms of biological role, ATP-dependent carboxylate-amine ligase which exhibits weak glutamate--cysteine ligase activity. The sequence is that of Putative glutamate--cysteine ligase 2 from Paracidovorax citrulli (strain AAC00-1) (Acidovorax citrulli).